The following is a 199-amino-acid chain: uncharacterized protein (199 aa).

Residues 38 to 169 (NRRAAVLIPI…SLDIHREGIN (132 aa)) enclose the Nudix hydrolase domain. The Nudix box signature appears at 76 to 98 (GKADPDDQSLISTALREAEEEVA). 2 residues coordinate Mg(2+): Glu-92 and Glu-96.

This sequence belongs to the Nudix hydrolase family. PCD1 subfamily. Requires Mn(2+) as cofactor. The cofactor is Mg(2+).

Its function is as follows. Probably mediates the hydrolysis of some nucleoside diphosphate derivatives. This is an uncharacterized protein from Yersinia pseudotuberculosis serotype I (strain IP32953).